Here is a 205-residue protein sequence, read N- to C-terminus: Glycerol-3-phosphate acyltransferase (205 aa).

5 helical membrane-spanning segments follow: residues 6 to 26, 55 to 75, 89 to 109, 120 to 140, and 162 to 182; these read STVL…AVVV, KAAI…VWLV, VALV…FRFV, ILLA…LVIA, and ALMF…VLLI.

Belongs to the PlsY family. As to quaternary structure, probably interacts with PlsX.

The protein localises to the cell inner membrane. It carries out the reaction an acyl phosphate + sn-glycerol 3-phosphate = a 1-acyl-sn-glycero-3-phosphate + phosphate. It participates in lipid metabolism; phospholipid metabolism. Its function is as follows. Catalyzes the transfer of an acyl group from acyl-phosphate (acyl-PO(4)) to glycerol-3-phosphate (G3P) to form lysophosphatidic acid (LPA). This enzyme utilizes acyl-phosphate as fatty acyl donor, but not acyl-CoA or acyl-ACP. This Herminiimonas arsenicoxydans protein is Glycerol-3-phosphate acyltransferase.